The chain runs to 263 residues: Endonuclease 8 (263 aa).

The active-site Schiff-base intermediate with DNA is proline 2. Residue glutamate 3 is the Proton donor of the active site. Lysine 53 acts as the Proton donor; for beta-elimination activity in catalysis. The DNA site is built by glutamine 70, arginine 125, and asparagine 169. The FPG-type zinc finger occupies lysine 229 to histidine 263. Arginine 253 acts as the Proton donor; for delta-elimination activity in catalysis.

It belongs to the FPG family. Zn(2+) serves as cofactor.

It catalyses the reaction 2'-deoxyribonucleotide-(2'-deoxyribose 5'-phosphate)-2'-deoxyribonucleotide-DNA = a 3'-end 2'-deoxyribonucleotide-(2,3-dehydro-2,3-deoxyribose 5'-phosphate)-DNA + a 5'-end 5'-phospho-2'-deoxyribonucleoside-DNA + H(+). Functionally, involved in base excision repair of DNA damaged by oxidation or by mutagenic agents. Acts as a DNA glycosylase that recognizes and removes damaged bases. Has a preference for oxidized pyrimidines, such as thymine glycol, 5,6-dihydrouracil and 5,6-dihydrothymine. Has AP (apurinic/apyrimidinic) lyase activity and introduces nicks in the DNA strand. Cleaves the DNA backbone by beta-delta elimination to generate a single-strand break at the site of the removed base with both 3'- and 5'-phosphates. This chain is Endonuclease 8, found in Escherichia coli O7:K1 (strain IAI39 / ExPEC).